The following is a 124-amino-acid chain: Non-structural protein 2 (124 aa).

The DLNP; interaction with MAP1B signature appears at 121 to 124 (DLNP).

It belongs to the pneumovirus non-structural protein 2 family. As to quaternary structure, monomer (instable). Homomultimer. Heteromultimer with NS1. Interacts with host RIGI (via N-terminus); this interaction prevents host signaling pathway involved in interferon production. Interacts with host MAP1B/microtubule-associated protein 1B.

It localises to the host mitochondrion. Its function is as follows. Plays a major role in antagonizing the type I IFN-mediated antiviral response. Acts cooperatively with NS1 to repress activation and nuclear translocation of host IFN-regulatory factor IRF3. Interacts with the host cytoplasmic sensor of viral nucleic acids RIGI and prevents the interaction with its downstream partner MAVS. Together with NS2, participates in the proteasomal degradation of host STAT2, IRF3, IRF7, TBK1 and RIGI through a NS-degradasome involving CUL2 and Elongin-C. The degradasome requires an intact mitochondrial MAVS. Induces host SOCS1 expression. Induces activation of NF-kappa-B. Suppresses premature apoptosis by an NF-kappa-B-dependent, interferon-independent mechanism promoting continued viral replication. This chain is Non-structural protein 2 (1B), found in Bos taurus (Bovine).